The primary structure comprises 114 residues: Large ribosomal subunit protein uL22 (114 aa).

This sequence belongs to the universal ribosomal protein uL22 family. As to quaternary structure, part of the 50S ribosomal subunit.

In terms of biological role, this protein binds specifically to 23S rRNA; its binding is stimulated by other ribosomal proteins, e.g. L4, L17, and L20. It is important during the early stages of 50S assembly. It makes multiple contacts with different domains of the 23S rRNA in the assembled 50S subunit and ribosome. Its function is as follows. The globular domain of the protein is located near the polypeptide exit tunnel on the outside of the subunit, while an extended beta-hairpin is found that lines the wall of the exit tunnel in the center of the 70S ribosome. This is Large ribosomal subunit protein uL22 from Aeromonas salmonicida (strain A449).